A 790-amino-acid chain; its full sequence is Disintegrin and metalloproteinase domain-containing protein 30 (790 aa).

Residues 1–27 form the signal peptide; that stretch reads MRSVQIFLSQCRLLLLLVPTMLLKSLG. Residues 28–198 constitute a propeptide that is removed on maturation; it reads EDVIFHPEGE…KARLRDFPGS (171 aa). Residues 170–177 carry the Cysteine switch motif; it reads QVCGLSDD. Cys172 serves as a coordination point for Zn(2+). At 199–687 the chain is on the extracellular side; the sequence is YKHPKYLELI…LRGAIPSSIW (489 aa). In terms of domain architecture, Peptidase M12B spans 203-393; it reads KYLELILLFD…SGATCLNNIP (191 aa). N-linked (GlcNAc...) asparagine glycosylation occurs at Asn222. Disulfide bonds link Cys313–Cys388, Cys353–Cys373, and Cys355–Cys361. A Zn(2+)-binding site is contributed by His338. The active site involves Glu339. Zn(2+) is bound by residues His342 and His348. 4 N-linked (GlcNAc...) asparagine glycosylation sites follow: Asn372, Asn438, Asn473, and Asn625. Residues 399–485 form the Disintegrin domain; that stretch reads LKRCGNKIVE…SCPNDVYKQD (87 aa). Cys457 and Cys477 form a disulfide bridge. Residues 629 to 663 enclose the EGF-like domain; it reads LQFDCLPEKCNTRGVCNNRKNCHCMYGWAPPFCEE. Disulfide bonds link Cys633–Cys644, Cys638–Cys650, and Cys652–Cys661. Residues 688–708 form a helical membrane-spanning segment; it reads VVSIIMFRLILLILSVVFVFF. Topologically, residues 709-790 are cytoplasmic; it reads RQVIGNHLKP…KAKSVKKQKK (82 aa). Over residues 720-779 the composition is skewed to basic and acidic residues; that stretch reads QEKMPLSKAKTEQEESKTKTVQEESKTKTGQEESEAKTGQEESKAKTGQEESKANIESKR. The disordered stretch occupies residues 720–790; that stretch reads QEKMPLSKAK…KAKSVKKQKK (71 aa). 5 tandem repeats follow at residues 732–740, 741–749, 750–758, 759–767, and 768–776. A 5 X 9 AA approximate repeats region spans residues 732 to 776; sequence QEESKTKTVQEESKTKTGQEESEAKTGQEESKAKTGQEESKANIE. The segment covering 780–790 has biased composition (basic residues); that stretch reads PKAKSVKKQKK.

Interacts with CTSD; this leads to activation of CTSD. Requires Zn(2+) as cofactor. As to expression, expressed in brain neurons (at protein level). Expressed in testis.

The protein localises to the late endosome membrane. Functionally, plays a role in lysosomal amyloid precursor protein (APP) processing by cleaving and activating CTSD/cathepsin D which leads to APP degradation. The chain is Disintegrin and metalloproteinase domain-containing protein 30 (ADAM30) from Homo sapiens (Human).